The primary structure comprises 874 residues: Alanine--tRNA ligase (874 aa).

Zn(2+) contacts are provided by His565, His569, Cys666, and His670.

Belongs to the class-II aminoacyl-tRNA synthetase family. Zn(2+) is required as a cofactor.

The protein localises to the cytoplasm. It carries out the reaction tRNA(Ala) + L-alanine + ATP = L-alanyl-tRNA(Ala) + AMP + diphosphate. Functionally, catalyzes the attachment of alanine to tRNA(Ala) in a two-step reaction: alanine is first activated by ATP to form Ala-AMP and then transferred to the acceptor end of tRNA(Ala). Also edits incorrectly charged Ser-tRNA(Ala) and Gly-tRNA(Ala) via its editing domain. This chain is Alanine--tRNA ligase, found in Polynucleobacter asymbioticus (strain DSM 18221 / CIP 109841 / QLW-P1DMWA-1) (Polynucleobacter necessarius subsp. asymbioticus).